The chain runs to 481 residues: ATP synthase subunit beta (481 aa).

167–174 (GGAGVGKT) serves as a coordination point for ATP.

It belongs to the ATPase alpha/beta chains family. In terms of assembly, F-type ATPases have 2 components, CF(1) - the catalytic core - and CF(0) - the membrane proton channel. CF(1) has five subunits: alpha(3), beta(3), gamma(1), delta(1), epsilon(1). CF(0) has three main subunits: a(1), b(2) and c(9-12). The alpha and beta chains form an alternating ring which encloses part of the gamma chain. CF(1) is attached to CF(0) by a central stalk formed by the gamma and epsilon chains, while a peripheral stalk is formed by the delta and b chains.

The protein localises to the cell membrane. The catalysed reaction is ATP + H2O + 4 H(+)(in) = ADP + phosphate + 5 H(+)(out). Produces ATP from ADP in the presence of a proton gradient across the membrane. The catalytic sites are hosted primarily by the beta subunits. In Corynebacterium jeikeium (strain K411), this protein is ATP synthase subunit beta.